Here is a 98-residue protein sequence, read N- to C-terminus: uncharacterized protein (98 aa).

Positions 58–98 are disordered; it reads ARFPVEDTAGGLLRTGGHRPQISDEEVSKRHHEQSHGQEDH.

This is an uncharacterized protein from Saccharomyces cerevisiae (strain ATCC 204508 / S288c) (Baker's yeast).